The sequence spans 649 residues: Acetyl-coenzyme A synthetase (649 aa).

CoA is bound by residues 189–192, Thr-311, and Asn-335; that span reads RGGK. ATP is bound by residues 387–389, 411–416, Asp-500, and Arg-515; these read GEP and DTWWQT. Ser-523 provides a ligand contact to CoA. Arg-526 is an ATP binding site. Residues Val-537, His-539, and Val-542 each coordinate Mg(2+). Arg-584 serves as a coordination point for CoA. At Lys-609 the chain carries N6-acetyllysine.

This sequence belongs to the ATP-dependent AMP-binding enzyme family. The cofactor is Mg(2+). Post-translationally, acetylated. Deacetylation by the SIR2-homolog deacetylase activates the enzyme.

It catalyses the reaction acetate + ATP + CoA = acetyl-CoA + AMP + diphosphate. Its function is as follows. Catalyzes the conversion of acetate into acetyl-CoA (AcCoA), an essential intermediate at the junction of anabolic and catabolic pathways. AcsA undergoes a two-step reaction. In the first half reaction, AcsA combines acetate with ATP to form acetyl-adenylate (AcAMP) intermediate. In the second half reaction, it can then transfer the acetyl group from AcAMP to the sulfhydryl group of CoA, forming the product AcCoA. The protein is Acetyl-coenzyme A synthetase of Sinorhizobium fredii (strain NBRC 101917 / NGR234).